The sequence spans 394 residues: Ketoisovalerate oxidoreductase subunit VorA (394 aa).

Heterotetramer of one alpha, one beta, one delta and one gamma chain.

The catalysed reaction is 3-methyl-2-oxobutanoate + 2 oxidized [2Fe-2S]-[ferredoxin] + CoA = 2-methylpropanoyl-CoA + 2 reduced [2Fe-2S]-[ferredoxin] + CO2 + H(+). The polypeptide is Ketoisovalerate oxidoreductase subunit VorA (vorA) (Pyrococcus furiosus (strain ATCC 43587 / DSM 3638 / JCM 8422 / Vc1)).